We begin with the raw amino-acid sequence, 225 residues long: Biosynthetic peptidoglycan transglycosylase (225 aa).

The helical transmembrane segment at 8–28 threads the bilayer; it reads VLLIFIGAILFIQLWIFSSLV.

This sequence belongs to the glycosyltransferase 51 family.

The protein resides in the cell inner membrane. It carries out the reaction [GlcNAc-(1-&gt;4)-Mur2Ac(oyl-L-Ala-gamma-D-Glu-L-Lys-D-Ala-D-Ala)](n)-di-trans,octa-cis-undecaprenyl diphosphate + beta-D-GlcNAc-(1-&gt;4)-Mur2Ac(oyl-L-Ala-gamma-D-Glu-L-Lys-D-Ala-D-Ala)-di-trans,octa-cis-undecaprenyl diphosphate = [GlcNAc-(1-&gt;4)-Mur2Ac(oyl-L-Ala-gamma-D-Glu-L-Lys-D-Ala-D-Ala)](n+1)-di-trans,octa-cis-undecaprenyl diphosphate + di-trans,octa-cis-undecaprenyl diphosphate + H(+). It participates in cell wall biogenesis; peptidoglycan biosynthesis. Its function is as follows. Peptidoglycan polymerase that catalyzes glycan chain elongation from lipid-linked precursors. This is Biosynthetic peptidoglycan transglycosylase from Acinetobacter baumannii (strain ATCC 17978 / DSM 105126 / CIP 53.77 / LMG 1025 / NCDC KC755 / 5377).